The chain runs to 344 residues: Aurora kinase B (344 aa).

Threonine 35 carries the phosphothreonine modification. A Phosphoserine modification is found at serine 62. The residue at position 64 (threonine 64) is a Phosphothreonine. The Protein kinase domain occupies 77 to 327; sequence FEIGRPLGKG…LAQVSAHPWV (251 aa). Residues 83-91 and lysine 106 contribute to the ATP site; that span reads LGKGKFGNV. Catalysis depends on aspartate 200, which acts as the Proton acceptor. Residue lysine 215 is modified to N6-acetyllysine. Residue serine 227 is modified to Phosphoserine. Threonine 232 is modified (phosphothreonine; by autocatalysis).

The protein belongs to the protein kinase superfamily. Ser/Thr protein kinase family. Aurora subfamily. In terms of assembly, component of the chromosomal passenger complex (CPC) composed of at least BIRC5/survivin, CDCA8/borealin, INCENP, AURKB or AURKC; predominantly independent AURKB- and AURKC-containing complexes exist. Associates with RACGAP1 during M phase. Interacts with SPDYC; this interaction may be required for proper localization of active, Thr-232-phosphorylated AURKB form during prometaphase and metaphase. Interacts with p53/TP53. Interacts (via the middle kinase domain) with NOC2L (via the N- and C-terminus domains). Interacts with CDCA1. Interacts with EVI5. Interacts with JTB. Interacts with NDC80. Interacts with PSMA3. Interacts with RNF2/RING1B. Interacts with SEPTIN1. Interacts with SIRT2. Interacts with TACC1. Interacts with TTC28. The phosphorylation of Thr-232 requires the binding to INCENP and occurs by means of an autophosphorylation mechanism. Thr-232 phosphorylation is indispensable for the AURKB kinase activity. In terms of processing, acetylated at Lys-215 by KAT5 at kinetochores, increasing AURKB activity and promoting accurate chromosome segregation in mitosis. Post-translationally, ubiquitinated by different BCR (BTB-CUL3-RBX1) E3 ubiquitin ligase complexes. Ubiquitinated by the BCR(KLHL9-KLHL13) E3 ubiquitin ligase complex, ubiquitination leads to removal from mitotic chromosomes and is required for cytokinesis. During anaphase, the BCR(KLHL21) E3 ubiquitin ligase complex recruits the CPC complex from chromosomes to the spindle midzone and mediates the ubiquitination of AURKB. Ubiquitination of AURKB by BCR(KLHL21) E3 ubiquitin ligase complex may not lead to its degradation by the proteasome. Deubiquitinated by USP35; inhibiting CDH1-mediated degradation of AURKB.

It localises to the nucleus. The protein localises to the chromosome. Its subcellular location is the centromere. It is found in the kinetochore. The protein resides in the cytoplasm. It localises to the cytoskeleton. The protein localises to the spindle. Its subcellular location is the midbody. It catalyses the reaction L-seryl-[protein] + ATP = O-phospho-L-seryl-[protein] + ADP + H(+). The catalysed reaction is L-threonyl-[protein] + ATP = O-phospho-L-threonyl-[protein] + ADP + H(+). Activity is greatly increased when AURKB is within the CPC complex. In particular, AURKB-phosphorylated INCENP acts as an activator of AURKB. Positive feedback between HASPIN and AURKB contributes to CPC localization. Its function is as follows. Serine/threonine-protein kinase component of the chromosomal passenger complex (CPC), a complex that acts as a key regulator of mitosis. The CPC complex has essential functions at the centromere in ensuring correct chromosome alignment and segregation and is required for chromatin-induced microtubule stabilization and spindle assembly. Involved in the bipolar attachment of spindle microtubules to kinetochores and is a key regulator for the onset of cytokinesis during mitosis. Required for central/midzone spindle assembly and cleavage furrow formation. Key component of the cytokinesis checkpoint, a process required to delay abscission to prevent both premature resolution of intercellular chromosome bridges and accumulation of DNA damage: phosphorylates CHMP4C, leading to retain abscission-competent VPS4 (VPS4A and/or VPS4B) at the midbody ring until abscission checkpoint signaling is terminated at late cytokinesis. AURKB phosphorylates the CPC complex subunits BIRC5/survivin, CDCA8/borealin and INCENP. Phosphorylation of INCENP leads to increased AURKB activity. Other known AURKB substrates involved in centromeric functions and mitosis are CENPA, DES/desmin, GPAF, KIF2C, NSUN2, RACGAP1, SEPTIN1, VIM/vimentin, HASPIN, and histone H3. A positive feedback loop involving HASPIN and AURKB contributes to localization of CPC to centromeres. Phosphorylation of VIM controls vimentin filament segregation in cytokinetic process, whereas histone H3 is phosphorylated at 'Ser-10' and 'Ser-28' during mitosis (H3S10ph and H3S28ph, respectively). AURKB is also required for kinetochore localization of BUB1 and SGO1. Phosphorylation of p53/TP53 negatively regulates its transcriptional activity. Key regulator of active promoters in resting B- and T-lymphocytes: acts by mediating phosphorylation of H3S28ph at active promoters in resting B-cells, inhibiting RNF2/RING1B-mediated ubiquitination of histone H2A and enhancing binding and activity of the USP16 deubiquitinase at transcribed genes. Acts as an inhibitor of CGAS during mitosis: catalyzes phosphorylation of the N-terminus of CGAS during the G2-M transition, blocking CGAS liquid phase separation and activation, and thereby preventing CGAS-induced autoimmunity. Phosphorylates KRT5 during anaphase and telophase. Phosphorylates ATXN10 which promotes phosphorylation of ATXN10 by PLK1 and may play a role in the regulation of cytokinesis and stimulating the proteasomal degradation of ATXN10. The protein is Aurora kinase B (AURKB) of Sus scrofa (Pig).